The chain runs to 45 residues: Photosystem II reaction center protein K (45 aa).

Positions 1–8 (MFSINFLG) are excised as a propeptide. The helical transmembrane segment at 17–37 (FDPIVDVLPIIPLLFLLLAFV) threads the bilayer.

The protein belongs to the PsbK family. In terms of assembly, PSII is composed of 1 copy each of membrane proteins PsbA, PsbB, PsbC, PsbD, PsbE, PsbF, PsbH, PsbI, PsbJ, PsbK, PsbL, PsbM, PsbT, PsbY, PsbZ, Psb30/Ycf12, at least 3 peripheral proteins of the oxygen-evolving complex and a large number of cofactors. It forms dimeric complexes.

It is found in the plastid. It localises to the chloroplast thylakoid membrane. Functionally, one of the components of the core complex of photosystem II (PSII). PSII is a light-driven water:plastoquinone oxidoreductase that uses light energy to abstract electrons from H(2)O, generating O(2) and a proton gradient subsequently used for ATP formation. It consists of a core antenna complex that captures photons, and an electron transfer chain that converts photonic excitation into a charge separation. The protein is Photosystem II reaction center protein K of Euglena viridis (Cercaria viridis).